We begin with the raw amino-acid sequence, 21 residues long: Cyanophlyctin (21 aa).

As to expression, expressed by the skin glands.

The protein localises to the secreted. Functionally, has antibacterial activity against E.coli HP101BA (MIC=6.4 uM), K.pneumoniae PTCC1388 (MIC=7.3 uM), M.luteus PTCC1625 (MIC=4.7 uM) and S.aureus PTCC1431 (MIC=5.3 uM). Has no or very limited (&lt;3%) hemolytic activity at concentrations of 15 ug/ml and 60 ug/ml, respectively. The protein is Cyanophlyctin of Euphlyctis cyanophlyctis (Skittering frog).